Consider the following 426-residue polypeptide: Glutamate-1-semialdehyde 2,1-aminomutase (426 aa).

Lys-265 bears the N6-(pyridoxal phosphate)lysine mark.

Belongs to the class-III pyridoxal-phosphate-dependent aminotransferase family. HemL subfamily. Homodimer. Pyridoxal 5'-phosphate serves as cofactor.

Its subcellular location is the cytoplasm. The catalysed reaction is (S)-4-amino-5-oxopentanoate = 5-aminolevulinate. It functions in the pathway porphyrin-containing compound metabolism; protoporphyrin-IX biosynthesis; 5-aminolevulinate from L-glutamyl-tRNA(Glu): step 2/2. The polypeptide is Glutamate-1-semialdehyde 2,1-aminomutase (Neisseria gonorrhoeae (strain ATCC 700825 / FA 1090)).